The primary structure comprises 375 residues: Glutamate 5-kinase (375 aa).

Lys13 provides a ligand contact to ATP. Substrate-binding residues include Ser54, Asp141, and Asn153. ATP-binding positions include 173–174 and 216–222; these read TD and TGGMATK. One can recognise a PUA domain in the interval 281–359; it reads TGKIFIDAGA…EAIAAVLGYV (79 aa).

Belongs to the glutamate 5-kinase family.

Its subcellular location is the cytoplasm. It carries out the reaction L-glutamate + ATP = L-glutamyl 5-phosphate + ADP. It participates in amino-acid biosynthesis; L-proline biosynthesis; L-glutamate 5-semialdehyde from L-glutamate: step 1/2. In terms of biological role, catalyzes the transfer of a phosphate group to glutamate to form L-glutamate 5-phosphate. The polypeptide is Glutamate 5-kinase (Synechocystis sp. (strain ATCC 27184 / PCC 6803 / Kazusa)).